The chain runs to 195 residues: Imidazoleglycerol-phosphate dehydratase (195 aa).

This sequence belongs to the imidazoleglycerol-phosphate dehydratase family.

It is found in the cytoplasm. It carries out the reaction D-erythro-1-(imidazol-4-yl)glycerol 3-phosphate = 3-(imidazol-4-yl)-2-oxopropyl phosphate + H2O. It participates in amino-acid biosynthesis; L-histidine biosynthesis; L-histidine from 5-phospho-alpha-D-ribose 1-diphosphate: step 6/9. The protein is Imidazoleglycerol-phosphate dehydratase of Citrifermentans bemidjiense (strain ATCC BAA-1014 / DSM 16622 / JCM 12645 / Bem) (Geobacter bemidjiensis).